The following is a 352-amino-acid chain: MDYQVSSPTYDIDYYTSEPCQKVNVKQIAARLLPPLYSLVFIFGFVGNILVVLILINCKRLKSMTDIYLLNLAISDLFFLLTVPFWAHYAAAQWDFGNTMCQLLTGLYFIGFFSGIFFIILLTIDRYLAIVHAVFALKARTVTFGVVTSVITWVVAVFASLPGIIFTRSQREGLHYTCSSHFPYSQYQFWKNFQTLKIVILGLVLPLLVMVICYSGILKTLLRCRSEKKRHRAVRLIFTIMIVYFLFWAPYNIVLLLNTFQEFFGLNNCSSSNRLDQAMQVTETLGMTHCCINPIIYAFVGEKFRNYLLVFFQKHIAKHFCKCCSIFQQEAPERASSVYTRSTGEQEISVGL.

At 1–30 (MDYQVSSPTYDIDYYTSEPCQKVNVKQIAA) the chain is on the extracellular side. Tyrosine 3 is modified (sulfotyrosine). Residues serine 6 and serine 7 are each glycosylated (O-linked (GalNAc...) serine). Sulfotyrosine is present on residues tyrosine 10, tyrosine 14, and tyrosine 15. Intrachain disulfides connect cysteine 20-cysteine 269 and cysteine 101-cysteine 178. A helical transmembrane segment spans residues 31–58 (RLLPPLYSLVFIFGFVGNILVVLILINC). Residues 59-68 (KRLKSMTDIY) lie on the Cytoplasmic side of the membrane. A helical membrane pass occupies residues 69 to 89 (LLNLAISDLFFLLTVPFWAHY). Over 90 to 102 (AAAQWDFGNTMCQ) the chain is Extracellular. The helical transmembrane segment at 103–124 (LLTGLYFIGFFSGIFFIILLTI) threads the bilayer. Residues 125–141 (DRYLAIVHAVFALKART) lie on the Cytoplasmic side of the membrane. A helical transmembrane segment spans residues 142 to 166 (VTFGVVTSVITWVVAVFASLPGIIF). At 167–198 (TRSQREGLHYTCSSHFPYSQYQFWKNFQTLKI) the chain is on the extracellular side. The helical transmembrane segment at 199 to 218 (VILGLVLPLLVMVICYSGIL) threads the bilayer. The Cytoplasmic segment spans residues 219–235 (KTLLRCRSEKKRHRAVR). The chain crosses the membrane as a helical span at residues 236-260 (LIFTIMIVYFLFWAPYNIVLLLNTF). Residues 261 to 277 (QEFFGLNNCSSSNRLDQ) are Extracellular-facing. The chain crosses the membrane as a helical span at residues 278 to 301 (AMQVTETLGMTHCCINPIIYAFVG). Residues 302–352 (EKFRNYLLVFFQKHIAKHFCKCCSIFQQEAPERASSVYTRSTGEQEISVGL) lie on the Cytoplasmic side of the membrane. S-palmitoyl cysteine attachment occurs at residues cysteine 321, cysteine 323, and cysteine 324. A phosphoserine; by BARK1 mark is found at serine 336, serine 337, serine 342, and serine 349.

The protein belongs to the G-protein coupled receptor 1 family. In terms of assembly, interacts with PRAF2. Efficient ligand binding to CCL3/MIP-1alpha and CCL4/MIP-1beta requires sulfation, O-glycosylation and sialic acid modifications. Glycosylation on Ser-6 is required for efficient binding of CCL4. Interacts with GRK2. Interacts with ARRB1 and ARRB2. Interacts with CNIH4. Interacts with S100A4; this interaction stimulates T-lymphocyte chemotaxis. Sulfated on at least 2 of the N-terminal tyrosines. Sulfation is required for efficient binding of the chemokines, CCL3 and CCL4. Post-translationally, palmitoylation in the C-terminal is important for cell surface expression. In terms of processing, phosphorylation on serine residues in the C-terminal is stimulated by binding CC chemokines especially by APO-RANTES. O-glycosylated, but not N-glycosylated. Ser-6 appears to be the major site even if Ser-7 may be also O-glycosylated. Also sialylated glycans present which contribute to chemokine binding. Thr-16 and Ser-17 may also be glycosylated and, if so, with small moieties such as a T-antigen.

The protein resides in the cell membrane. Functionally, receptor for a number of inflammatory CC-chemokines including CCL3/MIP-1-alpha, CCL4/MIP-1-beta and RANTES and subsequently transduces a signal by increasing the intracellular calcium ion level. May play a role in the control of granulocytic lineage proliferation or differentiation. Participates in T-lymphocyte migration to the infection site by acting as a chemotactic receptor. The sequence is that of C-C chemokine receptor type 5 (CCR5) from Trachypithecus johnii (Nilgiri langur).